A 366-amino-acid chain; its full sequence is Putative neutrophil cytosol factor 1C (366 aa).

The PX domain occupies 1-101; the sequence is MYMFLVKWQD…DFFKVRPDDL (101 aa). SH3 domains follow at residues 132–191 and 202–261; these read IILQ…PLDS and YAGE…KSGQ. The tract at residues 261–366 is disordered; it reads QDVSQAQRQI…STKRKLASAV (106 aa). 2 positions are modified to phosphoserine: S279 and S280. Positions 285 to 294 are enriched in basic residues; that stretch reads HSIHQRSRKR. S296, S304, S321, and S324 each carry phosphoserine.

It localises to the cytoplasm. Its function is as follows. May be required for activation of the latent NADPH oxidase (necessary for superoxide production). The chain is Putative neutrophil cytosol factor 1C (NCF1C) from Homo sapiens (Human).